The chain runs to 235 residues: Fibrillarin-like rRNA/tRNA 2'-O-methyltransferase (235 aa).

S-adenosyl-L-methionine is bound by residues 91–92, 110–111, 137–138, and 157–160; these read TT, EF, DA, and DVAQ.

It belongs to the methyltransferase superfamily. Fibrillarin family. Interacts with nop5. Component of box C/D small ribonucleoprotein (sRNP) particles that contain rpl7ae, FlpA and nop5, plus a guide RNA.

Its function is as follows. Involved in pre-rRNA and tRNA processing. Utilizes the methyl donor S-adenosyl-L-methionine to catalyze the site-specific 2'-hydroxyl methylation of ribose moieties in rRNA and tRNA. Site specificity is provided by a guide RNA that base pairs with the substrate. Methylation occurs at a characteristic distance from the sequence involved in base pairing with the guide RNA. The chain is Fibrillarin-like rRNA/tRNA 2'-O-methyltransferase from Pyrobaculum islandicum (strain DSM 4184 / JCM 9189 / GEO3).